The chain runs to 601 residues: ATP-dependent RNA helicase DeaD (601 aa).

The Q motif signature appears at 6 to 34; it reads STFSFLGLNPFIIQSLNEMGYVKPSPIQA. The region spanning 37–208 is the Helicase ATP-binding domain; the sequence is IPLLLEGRDV…KRFMRNPKEI (172 aa). 50-57 contacts ATP; it reads AQTGSGKT. Positions 156–159 match the DEAD box motif; the sequence is DEAD. The 148-residue stretch at 231–378 folds into the Helicase C-terminal domain; that stretch reads KTDALIRFLE…EVQLPKVELL (148 aa). The segment covering 552-576 has biased composition (basic and acidic residues); the sequence is SRHYENKTTHRSIFNKDKNSNRRVS. The segment at 552-601 is disordered; that stretch reads SRHYENKTTHRSIFNKDKNSNRRVSDGSFNKSNSPKKTEFKSSFFRRRNV.

The protein belongs to the DEAD box helicase family. DeaD/CsdA subfamily.

The protein localises to the cytoplasm. It catalyses the reaction ATP + H2O = ADP + phosphate + H(+). Its function is as follows. DEAD-box RNA helicase involved in various cellular processes at low temperature, including ribosome biogenesis, mRNA degradation and translation initiation. This Buchnera aphidicola subsp. Acyrthosiphon pisum (strain APS) (Acyrthosiphon pisum symbiotic bacterium) protein is ATP-dependent RNA helicase DeaD.